A 513-amino-acid polypeptide reads, in one-letter code: ATP synthase subunit alpha (513 aa).

169–176 (GDRQCGKT) is an ATP binding site.

Belongs to the ATPase alpha/beta chains family. F-type ATPases have 2 components, CF(1) - the catalytic core - and CF(0) - the membrane proton channel. CF(1) has five subunits: alpha(3), beta(3), gamma(1), delta(1), epsilon(1). CF(0) has three main subunits: a(1), b(2) and c(9-12). The alpha and beta chains form an alternating ring which encloses part of the gamma chain. CF(1) is attached to CF(0) by a central stalk formed by the gamma and epsilon chains, while a peripheral stalk is formed by the delta and b chains.

Its subcellular location is the cell inner membrane. The enzyme catalyses ATP + H2O + 4 H(+)(in) = ADP + phosphate + 5 H(+)(out). Produces ATP from ADP in the presence of a proton gradient across the membrane. The alpha chain is a regulatory subunit. The sequence is that of ATP synthase subunit alpha from Burkholderia orbicola (strain AU 1054).